Consider the following 101-residue polypeptide: MRIKADISRQQVKTHHLLVCVTIRIFVYTNRKPFIRCHGGVKAMQFWQGDGPKPTEKLIVEKIRFHLLFSRSYDRNCISCLNFCINGIVLRIFFIINRNTR.

This chain is Putative protein p25 (25), found in Acyrthosiphon pisum secondary endosymbiont phage 1 (Bacteriophage APSE-1).